The following is a 130-amino-acid chain: MANLPSDFSYSEDHEWINATADSVVGSTVRIGITSVATDRLGEVVFAELPAVGDTVEHGETCGEVESTKSVSDLYSPVTGTVTAVNEGVHDDYAVINNDPFGEGWLFEVEVTEAGELMTADEYASANGVD.

Residues 28 to 110 enclose the Lipoyl-binding domain; sequence TVRIGITSVA…FGEGWLFEVE (83 aa). Lysine 69 bears the N6-lipoyllysine mark.

It belongs to the GcvH family. In terms of assembly, the glycine cleavage system is composed of four proteins: P, T, L and H. (R)-lipoate serves as cofactor.

Functionally, the glycine cleavage system catalyzes the degradation of glycine. The H protein shuttles the methylamine group of glycine from the P protein to the T protein. This chain is Glycine cleavage system H protein, found in Corynebacterium aurimucosum (strain ATCC 700975 / DSM 44827 / CIP 107346 / CN-1) (Corynebacterium nigricans).